The chain runs to 517 residues: Cytochrome P450 monooxygenase stcB (517 aa).

A heme-binding site is contributed by cysteine 461.

This sequence belongs to the cytochrome P450 family. The cofactor is heme.

It functions in the pathway mycotoxin biosynthesis; sterigmatocystin biosynthesis. Functionally, cytochrome P450 monooxygenase; part of the gene cluster that mediates the biosynthesis of sterigmatocystin (ST), a polyketide-derived furanocoumarin which is part of the most toxic and carcinogenic compounds among the known mycotoxins. The first step in the biosynthesis of sterigmatocystin is the production of hexanoate by the fatty acid synthase (FAS) units stcJ and stcK. The polyketide backbone is assembled by the non-reducing polyketide synthase stcA by condensation of the starter hexanoyl-CoA and 7 malonyl-CoA extender units followed by cyclization and release of norsolorinic acid. Norsolorinic acid is the first stable intermediate in the biosynthesis of sterigmatocystin and is converted into averantin (AVN) by the ketoreductase stcE which reduces the hexanoate ketone to an alcohol. Averantin is then oxidized into 5'-hydroxyaverantin (HAVN) by the cytochrome P450 monooxygenase stcF. 5'-hydroxyaverantin is further converted to 5'-oxyaverantin (OAVN) by the 5'-hydroxyaverantin dehydrogenase stcG. The next step is the conversion of OAVN into averufin (AVF) which is catalyzed by a yet to be identified enzyme. The cytochrome P450 monooxygenase stcB and the flavin-binding monooxygenase stcW are both required for the conversion of averufin to 1-hydroxyversicolorone. The esterase stcI probably catalyzes the formation of versiconal hemiacetal acetate from 1-hydroxyversicolorone. The oxydoreductase stcN then probably catalyzes the biosynthetic step from versiconal to versicolorin B (VERB). The next step is performed by the versicolorin B desaturase stcL to produce versicolorin A (VERA). The ketoreductase stcU and the cytochrome P450 monooxygenase stcS are involved in the conversion of versicolorin A to demethylsterigmatocystin. The Baeyer-Villiger oxidas stcQ and the reductase stcR might be involved in the biosynthetic step from versicolorin A to demethylsterigmatocystin. The final step in the biosynthesis of sterigmatocystin is the methylation of demethylsterigmatocystin catalyzed by the methyltransferase stcP. This is Cytochrome P450 monooxygenase stcB from Emericella nidulans (strain FGSC A4 / ATCC 38163 / CBS 112.46 / NRRL 194 / M139) (Aspergillus nidulans).